We begin with the raw amino-acid sequence, 155 residues long: V-type proton ATPase 16 kDa proteolipid subunit c (155 aa).

Topologically, residues 1-10 are lumenal; sequence MSEAKSGPEY. The chain crosses the membrane as a helical span at residues 11–33; that stretch reads ASFFAVMGASAAMVFSALGAAYG. Topologically, residues 34–55 are cytoplasmic; it reads TAKSGTGIAAMSVMRPEMIMKS. Residues 56–76 form a helical membrane-spanning segment; sequence IIPVVMAGIIAIYGLVVAVLI. Over 77 to 92 the chain is Lumenal; the sequence is ANSLNDGISLYRSFLQ. Residues 93 to 114 traverse the membrane as a helical segment; that stretch reads LGAGLSVGLSGLAAGFAIGIVG. At 115–131 the chain is on the cytoplasmic side; it reads DAGVRGTAQQPRLFVGM. The chain crosses the membrane as a helical span at residues 132–152; the sequence is ILILIFAEVLGLYGLIVALIL. Topologically, residues 153 to 155 are lumenal; sequence STK.

The protein belongs to the V-ATPase proteolipid subunit family. V-ATPase is a heteromultimeric enzyme made up of two complexes: the ATP-hydrolytic V1 complex and the proton translocation V0 complex. The V1 complex consists of three catalytic AB heterodimers that form a heterohexamer, three peripheral stalks each consisting of EG heterodimers, one central rotor including subunits D and F, and the regulatory subunits C and H. The proton translocation complex V0 consists of the proton transport subunit a, a ring of proteolipid subunits c9c'', rotary subunit d, subunits e and f, and the accessory subunits ATP6AP1/Ac45 and ATP6AP2/PRR. Interacts with the V0 complex V-ATPase subunit a4 ATP6V0A4. Interacts with LASS2. Interacts with RNF182; this interaction leads to ubiquitination and degradation via the proteasome pathway. Ubiquitinated by RNF182, leading to its degradation via the ubiquitin-proteasome pathway.

It localises to the cytoplasmic vesicle. The protein resides in the clathrin-coated vesicle membrane. The protein localises to the secretory vesicle. Its subcellular location is the synaptic vesicle membrane. Proton-conducting pore forming subunit of the V0 complex of vacuolar(H+)-ATPase (V-ATPase), a multisubunit enzyme composed of a peripheral complex (V1) that hydrolyzes ATP and a membrane integral complex (V0) that translocates protons. V-ATPase is responsible for acidifying and maintaining the pH of intracellular compartments and in some cell types, is targeted to the plasma membrane, where it is responsible for acidifying the extracellular environment. The sequence is that of V-type proton ATPase 16 kDa proteolipid subunit c (ATP6V0C) from Ovis aries (Sheep).